Reading from the N-terminus, the 374-residue chain is tRNA-specific 2-thiouridylase MnmA (374 aa).

Residues Gly13–Ser20 and Met39 contribute to the ATP site. Positions Asn99–Asp101 are interaction with target base in tRNA. The active-site Nucleophile is the Cys104. A disulfide bridge connects residues Cys104 and Cys201. Residue Gly128 participates in ATP binding. The interval Lys151–Gln153 is interaction with tRNA. The active-site Cysteine persulfide intermediate is Cys201. The interval Arg313–Tyr314 is interaction with tRNA.

It belongs to the MnmA/TRMU family.

The protein resides in the cytoplasm. The enzyme catalyses S-sulfanyl-L-cysteinyl-[protein] + uridine(34) in tRNA + AH2 + ATP = 2-thiouridine(34) in tRNA + L-cysteinyl-[protein] + A + AMP + diphosphate + H(+). Catalyzes the 2-thiolation of uridine at the wobble position (U34) of tRNA, leading to the formation of s(2)U34. The sequence is that of tRNA-specific 2-thiouridylase MnmA from Streptococcus equi subsp. equi (strain 4047).